The primary structure comprises 453 residues: Tol-Pal system protein TolB (453 aa).

The first 31 residues, 1–31 (MINNLSISMTKVIKIILAIIIILFNTLSIFA), serve as a signal peptide directing secretion.

The protein belongs to the TolB family. In terms of assembly, the Tol-Pal system is composed of five core proteins: the inner membrane proteins TolA, TolQ and TolR, the periplasmic protein TolB and the outer membrane protein Pal. They form a network linking the inner and outer membranes and the peptidoglycan layer.

Its subcellular location is the periplasm. Functionally, part of the Tol-Pal system, which plays a role in outer membrane invagination during cell division and is important for maintaining outer membrane integrity. This chain is Tol-Pal system protein TolB, found in Orientia tsutsugamushi (strain Ikeda) (Rickettsia tsutsugamushi).